A 152-amino-acid polypeptide reads, in one-letter code: UPF0178 protein YaiI (152 aa).

This sequence belongs to the UPF0178 family.

This chain is UPF0178 protein YaiI, found in Escherichia coli O17:K52:H18 (strain UMN026 / ExPEC).